A 362-amino-acid chain; its full sequence is DNA replication and repair protein RecF (362 aa).

30–37 (GDNGAGKT) contributes to the ATP binding site.

This sequence belongs to the RecF family.

Its subcellular location is the cytoplasm. Its function is as follows. The RecF protein is involved in DNA metabolism; it is required for DNA replication and normal SOS inducibility. RecF binds preferentially to single-stranded, linear DNA. It also seems to bind ATP. This Xanthomonas oryzae pv. oryzae (strain MAFF 311018) protein is DNA replication and repair protein RecF.